The primary structure comprises 343 residues: Mitochondrial distribution and morphology protein 34 (343 aa).

Positions methionine 1–glutamine 196 constitute an SMP-LTD domain. 2 disordered regions span residues glutamate 227–glycine 255 and glycine 300–arginine 325. A compositionally biased stretch (low complexity) spans serine 306–glycine 317.

This sequence belongs to the MDM34 family. As to quaternary structure, component of the ER-mitochondria encounter structure (ERMES) or MDM complex, composed of MMM1, MDM10, MDM12 and MDM34.

The protein resides in the mitochondrion outer membrane. Functionally, component of the ERMES/MDM complex, which serves as a molecular tether to connect the endoplasmic reticulum (ER) and mitochondria. Components of this complex are involved in the control of mitochondrial shape and protein biogenesis, and function in nonvesicular lipid trafficking between the ER and mitochondria. MDM34 is required for the interaction of the ER-resident membrane protein MMM1 and the outer mitochondrial membrane-resident beta-barrel protein MDM10. The protein is Mitochondrial distribution and morphology protein 34 of Cryptococcus neoformans var. neoformans serotype D (strain B-3501A) (Filobasidiella neoformans).